Consider the following 158-residue polypeptide: Transcription elongation factor GreA (158 aa).

The stretch at 47–74 forms a coiled coil; that stretch reads AEYHAAKEEQSHNEGRIAELEDKLARAD.

This sequence belongs to the GreA/GreB family.

In terms of biological role, necessary for efficient RNA polymerase transcription elongation past template-encoded arresting sites. The arresting sites in DNA have the property of trapping a certain fraction of elongating RNA polymerases that pass through, resulting in locked ternary complexes. Cleavage of the nascent transcript by cleavage factors such as GreA or GreB allows the resumption of elongation from the new 3'terminus. GreA releases sequences of 2 to 3 nucleotides. The polypeptide is Transcription elongation factor GreA (Bradyrhizobium sp. (strain BTAi1 / ATCC BAA-1182)).